We begin with the raw amino-acid sequence, 92 residues long: ATP synthase subunit c (92 aa).

Transmembrane regions (helical) follow at residues G20–L40 and M71–V91.

The protein belongs to the ATPase C chain family. As to quaternary structure, F-type ATPases have 2 components, F(1) - the catalytic core - and F(0) - the membrane proton channel. F(1) has five subunits: alpha(3), beta(3), gamma(1), delta(1), epsilon(1). F(0) has three main subunits: a(1), b(2) and c(10-14). The alpha and beta chains form an alternating ring which encloses part of the gamma chain. F(1) is attached to F(0) by a central stalk formed by the gamma and epsilon chains, while a peripheral stalk is formed by the delta and b chains.

The protein localises to the cell membrane. In terms of biological role, f(1)F(0) ATP synthase produces ATP from ADP in the presence of a proton or sodium gradient. F-type ATPases consist of two structural domains, F(1) containing the extramembraneous catalytic core and F(0) containing the membrane proton channel, linked together by a central stalk and a peripheral stalk. During catalysis, ATP synthesis in the catalytic domain of F(1) is coupled via a rotary mechanism of the central stalk subunits to proton translocation. Its function is as follows. Key component of the F(0) channel; it plays a direct role in translocation across the membrane. A homomeric c-ring of between 10-14 subunits forms the central stalk rotor element with the F(1) delta and epsilon subunits. The sequence is that of ATP synthase subunit c from Mycoplasmopsis pulmonis (strain UAB CTIP) (Mycoplasma pulmonis).